We begin with the raw amino-acid sequence, 283 residues long: Cyclin-C (283 aa).

One can recognise a Cyclin N-terminal domain in the interval 46–144; the sequence is NVIQALGEHL…ILECEFYLLE (99 aa). Residues 252-283 form a disordered region; sequence SILSKMPKPKPPPNSDGEQGTNGSQSSGYSQS. A compositionally biased stretch (polar residues) spans 267–283; that stretch reads DGEQGTNGSQSSGYSQS.

It belongs to the cyclin family. Cyclin C subfamily. As to quaternary structure, component of the Mediator complex. The cylin/CDK pair formed by ccnc/cdk8 also associates with the large subunit of RNA polymerase II.

The protein localises to the nucleus. Functionally, component of the Mediator complex, a coactivator involved in regulated gene transcription of nearly all RNA polymerase II-dependent genes. Mediator functions as a bridge to convey information from gene-specific regulatory proteins to the basal RNA polymerase II transcription machinery. Mediator is recruited to promoters by direct interactions with regulatory proteins and serves as a scaffold for the assembly of a functional preinitiation complex with RNA polymerase II and the general transcription factors. Binds to and activates cyclin-dependent kinase cdk8 that phosphorylates the CTD (C-terminal domain) of the large subunit of RNA polymerase II (RNAp II), which may inhibit the formation of a transcription initiation complex. This is Cyclin-C (ccnc) from Xenopus laevis (African clawed frog).